The primary structure comprises 242 residues: Probable porphobilinogen deaminase (242 aa).

It belongs to the HMBS family.

The enzyme catalyses 4 porphobilinogen + H2O = hydroxymethylbilane + 4 NH4(+). It participates in porphyrin-containing compound metabolism; protoporphyrin-IX biosynthesis; coproporphyrinogen-III from 5-aminolevulinate: step 2/4. Tetrapolymerization of the monopyrrole PBG into the hydroxymethylbilane pre-uroporphyrinogen in several discrete steps. This chain is Probable porphobilinogen deaminase (hemC), found in Chlamydia muridarum (strain MoPn / Nigg).